The sequence spans 327 residues: Glycerol-3-phosphate dehydrogenase [NAD(P)+] (327 aa).

The NADPH site is built by F13, R34, and K107. Sn-glycerol 3-phosphate is bound by residues K107 and G135. A139 contacts NADPH. Sn-glycerol 3-phosphate contacts are provided by K190, D243, S253, R254, and N255. K190 acts as the Proton acceptor in catalysis. R254 serves as a coordination point for NADPH. Residues V276 and E277 each contribute to the NADPH site.

It belongs to the NAD-dependent glycerol-3-phosphate dehydrogenase family.

It is found in the cytoplasm. It catalyses the reaction sn-glycerol 3-phosphate + NAD(+) = dihydroxyacetone phosphate + NADH + H(+). The enzyme catalyses sn-glycerol 3-phosphate + NADP(+) = dihydroxyacetone phosphate + NADPH + H(+). Its pathway is membrane lipid metabolism; glycerophospholipid metabolism. Its function is as follows. Catalyzes the reduction of the glycolytic intermediate dihydroxyacetone phosphate (DHAP) to sn-glycerol 3-phosphate (G3P), the key precursor for phospholipid synthesis. In Rhizobium etli (strain ATCC 51251 / DSM 11541 / JCM 21823 / NBRC 15573 / CFN 42), this protein is Glycerol-3-phosphate dehydrogenase [NAD(P)+].